We begin with the raw amino-acid sequence, 742 residues long: Vesicle-fusing ATPase (742 aa).

Residues 499–504 and 539–546 contribute to the ATP site; these read NGMVDC and SGSGKTAL. Residue Thr-544 coordinates Mg(2+).

Belongs to the AAA ATPase family. Homohexamer. Binds to SNARE-SNAP complexes to form 20S particles. Mg(2+) serves as cofactor.

The protein localises to the cytoplasm. The catalysed reaction is ATP + H2O = ADP + phosphate + H(+). In terms of biological role, required for vesicle-mediated transport. Catalyzes the fusion of transport vesicles within the Golgi cisternae. Is also required for transport from the endoplasmic reticulum to the Golgi stack. Seems to function as a fusion protein required for the delivery of cargo proteins to all compartments of the Golgi stack independent of vesicle origin. Required for maintaining the normal morphology of the Golgi apparatus. The sequence is that of Vesicle-fusing ATPase from Arabidopsis thaliana (Mouse-ear cress).